The primary structure comprises 537 residues: Beta-galactoside alpha-2,6-sialyltransferase 2 (537 aa).

At methionine 1 to arginine 10 the chain is on the cytoplasmic side. A helical; Signal-anchor for type II membrane protein transmembrane segment spans residues leucine 11 to leucine 31. Topologically, residues aspartate 32–isoleucine 537 are lumenal. Disordered regions lie at residues threonine 83–isoleucine 117 and glycine 134–serine 202. Residues glycine 134–valine 145 show a composition bias toward polar residues. Residues glutamate 166–valine 185 show a composition bias toward acidic residues. 3 disulfides stabilise this stretch: cysteine 265/cysteine 535, cysteine 312/cysteine 464, and cysteine 482/cysteine 493. N-linked (GlcNAc...) asparagine glycans are attached at residues asparagine 353 and asparagine 373.

It belongs to the glycosyltransferase 29 family.

It is found in the golgi apparatus. The protein localises to the golgi stack membrane. It catalyses the reaction a beta-D-galactoside + CMP-N-acetyl-beta-neuraminate = an N-acetyl-alpha-neuraminyl-(2-&gt;6)-beta-D-galactosyl derivative + CMP + H(+). Transfers sialic acid from the donor of substrate CMP-sialic acid to galactose containing acceptor substrates. The protein is Beta-galactoside alpha-2,6-sialyltransferase 2 (st6gal2) of Takifugu rubripes (Japanese pufferfish).